Consider the following 154-residue polypeptide: Interleukin-7 (154 aa).

The signal sequence occupies residues 1–25; sequence MFHVSFRYIFGIPPLILVLLPVTSS. 3 disulfide bridges follow: C27/C145, C58/C133, and C71/C116. N-linked (GlcNAc...) asparagine glycosylation is found at N94 and N115.

The protein belongs to the IL-7/IL-9 family. As to quaternary structure, interacts with IL7R and CSF2RG. Post-translationally, three disulfide bonds are present.

Its subcellular location is the secreted. Hematopoietic cytokine that plays an essential role in the development, expansion, and survival of naive and memory T-cells and B-cells thereby regulating the number of mature lymphocytes and maintaining lymphoid homeostasis. Mechanistically, exerts its biological effects through a receptor composed of IL7RA subunit and the cytokine receptor common subunit gamma/CSF2RG. Binding to the receptor leads to activation of various kinases including JAK1 or JAK3 depending on the cell type and subsequently propagation of signals through activation of several downstream signaling pathways including the PI3K/Akt/mTOR or the JAK-STAT5. The protein is Interleukin-7 (Il7) of Rattus norvegicus (Rat).